The sequence spans 365 residues: Phospho-N-acetylmuramoyl-pentapeptide-transferase (365 aa).

Helical transmembrane passes span 22–42 (YISVRIIMISITSLLITLALG), 74–94 (TMGGVLILSSVIISCLLWGDL), 95–115 (TSIYLWILILVVIFFGAIGFF), 133–153 (YKFALQSIFSIVLAIVLFYLL), 168–188 (SLYIPMGIVIFVVLAFFIING), 201–221 (GLAIVPVVLVAAGLGIYAYIE), 240–260 (LAEVAVFCAAVCGSGLAFLWF), 267–287 (VFMGDVGSLTLGAVLGVIAVM), 292–312 (LIFFIMGLLFVVEALSVMLQV), and 342–362 (KVVIRFWIISLILFLIGLAAI).

It belongs to the glycosyltransferase 4 family. MraY subfamily. The cofactor is Mg(2+).

It localises to the cell inner membrane. It carries out the reaction UDP-N-acetyl-alpha-D-muramoyl-L-alanyl-gamma-D-glutamyl-meso-2,6-diaminopimeloyl-D-alanyl-D-alanine + di-trans,octa-cis-undecaprenyl phosphate = di-trans,octa-cis-undecaprenyl diphospho-N-acetyl-alpha-D-muramoyl-L-alanyl-D-glutamyl-meso-2,6-diaminopimeloyl-D-alanyl-D-alanine + UMP. The protein operates within cell wall biogenesis; peptidoglycan biosynthesis. Functionally, catalyzes the initial step of the lipid cycle reactions in the biosynthesis of the cell wall peptidoglycan: transfers peptidoglycan precursor phospho-MurNAc-pentapeptide from UDP-MurNAc-pentapeptide onto the lipid carrier undecaprenyl phosphate, yielding undecaprenyl-pyrophosphoryl-MurNAc-pentapeptide, known as lipid I. This Francisella tularensis subsp. tularensis (strain WY96-3418) protein is Phospho-N-acetylmuramoyl-pentapeptide-transferase.